The chain runs to 516 residues: MRLYSGAILCTIATLLISVSTASKTTGSHLSTRLPLPIDKPENNSLPRFLRVSTQNTENGENRVISAGLEKLTDLAKAGVSNINLGSWISKDPPAEPILRRFKLTNGMDDALASPNLKALENYVKELNTQNNNNKASVIGMFMAHYGDDAVANALMTAQRAGGEMNTIQRLRNAQLLSWLQKRKSVDDVFTLLKLRSDGYLALASPKMEVLDDYIKLVISTKSTKDSLLKTLTKGFGGKEQLATILARAREDVKTRELALALQSALINKWVRVDLLRPKHIYKKLRLNRGLDALLDRNVHTFGAFISMYNAKNPNSKASLIDSFVAQYGNKAVATALTFAKPDDAATMNLVITLQRQQFLKWKEGGISANSVFRLLDIHFNDLLSPTNPKFDTLSGYLATLSNKNLLYNEGMLRAVSKGFGGEDELAIQTARAREHLIRNGYADLDEISIATEYQRMLFGRWFKRKTKPSDIYGTTFRSSENTASNLERATAARYKDYYKEHMAPPRIDTSINPRR.

An N-terminal signal peptide occupies residues 1 to 22 (MRLYSGAILCTIATLLISVSTA). The short motif at 48-63 (RFLRVSTQNTENGENR) is the RxLR-dEER element.

The protein belongs to the RxLR effector family.

It localises to the secreted. The protein localises to the host cell membrane. The protein resides in the host nucleus. Its subcellular location is the host cytoplasm. Its function is as follows. Effector that enhances P.infestans colonization of Nicotiana benthamiana leaves. The polypeptide is RxLR effector protein PITG_15127 (Phytophthora infestans (strain T30-4) (Potato late blight agent)).